The primary structure comprises 396 residues: Elongation factor Tu (396 aa).

A tr-type G domain is found at 10–205 (KPHVNIGTIG…AVDESIPDPV (196 aa)). The interval 19 to 26 (GHVDHGKT) is G1. Residue 19-26 (GHVDHGKT) participates in GTP binding. A Mg(2+)-binding site is contributed by Thr26. The interval 62–66 (GITIN) is G2. Residues 83–86 (DAPG) are G3. GTP-binding positions include 83–87 (DAPGH) and 138–141 (NKAD). Residues 138-141 (NKAD) are G4. Positions 175–177 (SAL) are G5.

It belongs to the TRAFAC class translation factor GTPase superfamily. Classic translation factor GTPase family. EF-Tu/EF-1A subfamily. As to quaternary structure, monomer.

The protein localises to the cytoplasm. The enzyme catalyses GTP + H2O = GDP + phosphate + H(+). In terms of biological role, GTP hydrolase that promotes the GTP-dependent binding of aminoacyl-tRNA to the A-site of ribosomes during protein biosynthesis. In Rhodococcus jostii (strain RHA1), this protein is Elongation factor Tu.